The sequence spans 1004 residues: Translation initiation factor IF-2 (1004 aa).

The disordered stretch occupies residues 36-393; the sequence is SSTIEPPVVK…RQKRNEYESM (358 aa). Composition is skewed to low complexity over residues 62-157 and 173-183; these read AAKP…AKPA and AAKPGAEAPRP. Pro residues-rich tracts occupy residues 184 to 196 and 219 to 236; these read GGMP…PAPK and PRPG…PGGG. 2 stretches are compositionally biased toward gly residues: residues 237–249 and 261–277; these read PRPQ…GGQR and GNRG…GPRP. The span at 279–303 shows a compositional bias: low complexity; the sequence is GGPRPQGGSRPQGGSAQGAQGAPSQ. Residues 330–373 show a composition bias toward gly residues; that stretch reads GKGGRGGQAGGGAGGGFNRGGGTGGGAGRGGRRGGTAGAFGRPG. Over residues 377–386 the composition is skewed to basic residues; that stretch reads RRGRKSKRQK. Residues 499–671 form the tr-type G domain; that stretch reads KRPPVVTVMG…VCLTADAELD (173 aa). Positions 508–515 are G1; it reads GHVDHGKT. 508-515 lines the GTP pocket; the sequence is GHVDHGKT. Positions 533 to 537 are G2; it reads GITQG. Residues 558–561 form a G3 region; sequence DTPG. Residues 558–562 and 612–615 each bind GTP; these read DTPGH and NKID. A G4 region spans residues 612-615; it reads NKID. The interval 648-650 is G5; the sequence is SAK.

Belongs to the TRAFAC class translation factor GTPase superfamily. Classic translation factor GTPase family. IF-2 subfamily.

The protein localises to the cytoplasm. Functionally, one of the essential components for the initiation of protein synthesis. Protects formylmethionyl-tRNA from spontaneous hydrolysis and promotes its binding to the 30S ribosomal subunits. Also involved in the hydrolysis of GTP during the formation of the 70S ribosomal complex. The protein is Translation initiation factor IF-2 of Corynebacterium glutamicum (strain ATCC 13032 / DSM 20300 / JCM 1318 / BCRC 11384 / CCUG 27702 / LMG 3730 / NBRC 12168 / NCIMB 10025 / NRRL B-2784 / 534).